The following is a 426-amino-acid chain: Glutamate-1-semialdehyde 2,1-aminomutase (426 aa).

Lys-268 carries the post-translational modification N6-(pyridoxal phosphate)lysine.

Belongs to the class-III pyridoxal-phosphate-dependent aminotransferase family. HemL subfamily. The cofactor is pyridoxal 5'-phosphate.

Its subcellular location is the cytoplasm. It catalyses the reaction (S)-4-amino-5-oxopentanoate = 5-aminolevulinate. Its pathway is porphyrin-containing compound metabolism; protoporphyrin-IX biosynthesis; 5-aminolevulinate from L-glutamyl-tRNA(Glu): step 2/2. The chain is Glutamate-1-semialdehyde 2,1-aminomutase from Saccharolobus islandicus (strain M.16.27) (Sulfolobus islandicus).